A 227-amino-acid chain; its full sequence is Ribose-5-phosphate isomerase A (227 aa).

Substrate contacts are provided by residues 28–31 (TGST), 84–87 (DGAD), and 97–100 (KGGG). E106 serves as the catalytic Proton acceptor. K124 contacts substrate.

Belongs to the ribose 5-phosphate isomerase family. In terms of assembly, homodimer.

The catalysed reaction is aldehydo-D-ribose 5-phosphate = D-ribulose 5-phosphate. It participates in carbohydrate degradation; pentose phosphate pathway; D-ribose 5-phosphate from D-ribulose 5-phosphate (non-oxidative stage): step 1/1. Catalyzes the reversible conversion of ribose-5-phosphate to ribulose 5-phosphate. This is Ribose-5-phosphate isomerase A from Lactiplantibacillus plantarum (strain ATCC BAA-793 / NCIMB 8826 / WCFS1) (Lactobacillus plantarum).